We begin with the raw amino-acid sequence, 87 residues long: uncharacterized protein (87 aa).

It to bacteriophage lambda exonuclease exo.

This is an uncharacterized protein from Escherichia coli (strain K12).